Here is a 385-residue protein sequence, read N- to C-terminus: Putative nickel insertion protein (385 aa).

This sequence belongs to the LarC family.

This Geobacter sp. (strain M21) protein is Putative nickel insertion protein.